A 366-amino-acid chain; its full sequence is Tripartite motif-containing protein 54 (366 aa).

The RING-type zinc-finger motif lies at 26 to 82; the sequence is CPICLEMFSKPVVILPCQHNLCRKCANDVFQASNPLWQSRSSTTVSSGGRFRCPSCR. The segment at 121–163 adopts a B box-type zinc-finger fold; the sequence is EQHLMCEEHEDEKINIYCLSCEVPTCSLCKVFGAHKDCEVAPL. C126, H129, C149, and H155 together coordinate Zn(2+). Positions 168–211 are mediates microtubule-binding and homooligomerization; that stretch reads KRQKSELSDGIAMLVAGNDRVQAVITQMEEVCQTIEENSRRQKQ. Residues 185–258 adopt a coiled-coil conformation; sequence NDRVQAVITQ…LIRQYGDHLE (74 aa). The region spanning 271–329 is the COS domain; the sequence is MEEPQMALYLQQAKELINKVGTMSKVELAGRPEPGYERMDQFTVSVEHVAEMLRTIDFQ. The segment at 326–366 is disordered; sequence IDFQPGTSGEEEDEEVAVEGEEGNAGPEEERTDGRESTGQH. Acidic residues predominate over residues 334-347; the sequence is GEEEDEEVAVEGEE. The segment covering 353-366 has biased composition (basic and acidic residues); sequence EEERTDGRESTGQH.

As to quaternary structure, homooligomer and heterooligomer. Interacts with TRIM63 and probably with TRIM55. Interacts with tubulin.

The protein localises to the cytoplasm. It localises to the cytoskeleton. The protein resides in the myofibril. Its subcellular location is the sarcomere. It is found in the z line. In terms of biological role, may bind and stabilize microtubules during myotubes formation. In Bos taurus (Bovine), this protein is Tripartite motif-containing protein 54 (TRIM54).